Here is a 415-residue protein sequence, read N- to C-terminus: Histidine--tRNA ligase (415 aa).

This sequence belongs to the class-II aminoacyl-tRNA synthetase family. As to quaternary structure, homodimer.

The protein localises to the cytoplasm. It catalyses the reaction tRNA(His) + L-histidine + ATP = L-histidyl-tRNA(His) + AMP + diphosphate + H(+). This Clostridium botulinum (strain Langeland / NCTC 10281 / Type F) protein is Histidine--tRNA ligase.